A 363-amino-acid chain; its full sequence is uncharacterized protein (363 aa).

This is an uncharacterized protein from Methanocaldococcus jannaschii (strain ATCC 43067 / DSM 2661 / JAL-1 / JCM 10045 / NBRC 100440) (Methanococcus jannaschii).